An 899-amino-acid chain; its full sequence is Valine--tRNA ligase (899 aa).

The 'HIGH' region signature appears at 60 to 70 (PNVTGVLHMGH). Residues 539 to 543 (KMSKS) carry the 'KMSKS' region motif. Lys-542 lines the ATP pocket. A coiled-coil region spans residues 827-898 (AGLIDLDEEQ…KQGLEKLAAL (72 aa)).

Belongs to the class-I aminoacyl-tRNA synthetase family. ValS type 1 subfamily. In terms of assembly, monomer.

The protein resides in the cytoplasm. It carries out the reaction tRNA(Val) + L-valine + ATP = L-valyl-tRNA(Val) + AMP + diphosphate. Functionally, catalyzes the attachment of valine to tRNA(Val). As ValRS can inadvertently accommodate and process structurally similar amino acids such as threonine, to avoid such errors, it has a 'posttransfer' editing activity that hydrolyzes mischarged Thr-tRNA(Val) in a tRNA-dependent manner. The protein is Valine--tRNA ligase of Syntrophotalea carbinolica (strain DSM 2380 / NBRC 103641 / GraBd1) (Pelobacter carbinolicus).